The sequence spans 258 residues: Type III pantothenate kinase (258 aa).

6–13 (DVGNTNTV) contributes to the ATP binding site. Substrate-binding positions include Tyr100 and 107-110 (GADR). Asp109 (proton acceptor) is an active-site residue. Residue Asp129 coordinates K(+). Thr132 provides a ligand contact to ATP. Substrate is bound at residue Thr184.

This sequence belongs to the type III pantothenate kinase family. As to quaternary structure, homodimer. NH4(+) is required as a cofactor. The cofactor is K(+).

It is found in the cytoplasm. The enzyme catalyses (R)-pantothenate + ATP = (R)-4'-phosphopantothenate + ADP + H(+). The protein operates within cofactor biosynthesis; coenzyme A biosynthesis; CoA from (R)-pantothenate: step 1/5. Its function is as follows. Catalyzes the phosphorylation of pantothenate (Pan), the first step in CoA biosynthesis. The chain is Type III pantothenate kinase from Geobacillus kaustophilus (strain HTA426).